A 74-amino-acid polypeptide reads, in one-letter code: Protein WFDC9 (74 aa).

The first 19 residues, 1-19 (MKFWILLLTVSAHGIVVFL), serve as a signal peptide directing secretion.

The protein localises to the secreted. The polypeptide is Protein WFDC9 (Wfdc9) (Rattus norvegicus (Rat)).